A 451-amino-acid chain; its full sequence is Glutamyl-tRNA reductase (451 aa).

Residues 47-50 (TCNR), Ser-132, 137-139 (EPQ), and Gln-143 contribute to the substrate site. Cys-48 functions as the Nucleophile in the catalytic mechanism. NADP(+) is bound at residue 212 to 217 (AAGEMN).

Belongs to the glutamyl-tRNA reductase family. In terms of assembly, homodimer.

The catalysed reaction is (S)-4-amino-5-oxopentanoate + tRNA(Glu) + NADP(+) = L-glutamyl-tRNA(Glu) + NADPH + H(+). Its pathway is porphyrin-containing compound metabolism; protoporphyrin-IX biosynthesis; 5-aminolevulinate from L-glutamyl-tRNA(Glu): step 1/2. Functionally, catalyzes the NADPH-dependent reduction of glutamyl-tRNA(Glu) to glutamate 1-semialdehyde (GSA). This is Glutamyl-tRNA reductase from Psychrobacter sp. (strain PRwf-1).